A 527-amino-acid chain; its full sequence is Inositolphosphotransferase 1 (527 aa).

Over Met-1 to Leu-24 the chain is Cytoplasmic. Residues Ile-25–Phe-45 form a helical membrane-spanning segment. Topologically, residues Lys-46 to Ser-99 are lumenal. Residues Ala-100 to Ile-120 form a helical membrane-spanning segment. Residues Lys-121 to Thr-152 lie on the Cytoplasmic side of the membrane. The chain crosses the membrane as a helical span at residues Ile-153 to Phe-173. The Lumenal portion of the chain corresponds to Ala-174–Trp-190. A helical membrane pass occupies residues Phe-191 to Phe-211. Over Gln-212–Cys-219 the chain is Cytoplasmic. A helical membrane pass occupies residues Phe-220–Met-240. Residues Ala-241–Pro-288 lie on the Lumenal side of the membrane. Residues Ile-289–Leu-309 form a helical membrane-spanning segment. At Val-310–Gly-435 the chain is on the cytoplasmic side. Positions Asn-331–Ser-404 are disordered. Residues Glu-376–Ser-389 show a composition bias toward low complexity. The helical transmembrane segment at Phe-436–Leu-456 threads the bilayer. Topologically, residues Asp-457 to Arg-461 are lumenal. A helical transmembrane segment spans residues Phe-462–Val-482. The Cytoplasmic segment spans residues Leu-483–Ala-527.

The protein resides in the golgi apparatus membrane. The enzyme catalyses an alpha-D-mannosyl-(1&lt;-&gt;6)-1D-myo-inositol-1-phospho-N-[(R)-2-hydroxy-very-long-chain fatty acyl]-(R)-4-hydroxysphingoid base + a 1,2-diacyl-sn-glycero-3-phospho-(1D-myo-inositol) = an alpha-D-mannosyl-6-(1D-myo-inositol phospho)-(1&lt;-&gt;6)-1D-myo-inositol-1-phospho-N-[(R)-2-hydroxy-very-long-chain fatty acyl]-(R)-4-hydroxysphingoid base + a 1,2-diacyl-sn-glycerol. It catalyses the reaction a mannosylinositol-1-phospho-N-acyl-sphingoid base + a 1,2-diacyl-sn-glycero-3-phospho-(1D-myo-inositol) = an inositol phosphomannosylnositol-1-phospho-N-acylsphingoid base + a 1,2-diacyl-sn-glycerol. It carries out the reaction a mannosylinositol-1-phospho-N-(2-hydroxyacyl)-4R-hydroxysphingoid base + a 1,2-diacyl-sn-glycero-3-phospho-(1D-myo-inositol) = an inositol phosphomannosylnositol-1-phospho-N-(2-hydroxyacyl)-4R-hydroxysphingoid base + a 1,2-diacyl-sn-glycerol. Its function is as follows. Catalyzes the addition of a phosphorylinositol group onto mannosyl phosphorylinositol ceramide (MIPC) to form mannosyl diphosphorylinositol ceramide (M(IP)2C), the major sphingolipid in membranes of S.cerevisiae. This Saccharomyces cerevisiae (strain ATCC 204508 / S288c) (Baker's yeast) protein is Inositolphosphotransferase 1.